We begin with the raw amino-acid sequence, 321 residues long: Phospho-N-acetylmuramoyl-pentapeptide-transferase (321 aa).

10 consecutive transmembrane segments (helical) span residues 1-21 (MVYL…PVLI), 50-70 (MGGL…IIFI), 76-96 (IILL…DDYI), 112-132 (FLAQ…FNLT), 140-160 (IPFI…IVFW), 173-193 (GLDG…AIMA), 198-218 (ATSI…FLPF), 225-245 (VFMG…ISIM), 250-270 (LSLL…MIQV), and 300-320 (VVTV…WIGV).

It belongs to the glycosyltransferase 4 family. MraY subfamily. It depends on Mg(2+) as a cofactor.

The protein localises to the cell membrane. It carries out the reaction UDP-N-acetyl-alpha-D-muramoyl-L-alanyl-gamma-D-glutamyl-L-lysyl-D-alanyl-D-alanine + di-trans,octa-cis-undecaprenyl phosphate = Mur2Ac(oyl-L-Ala-gamma-D-Glu-L-Lys-D-Ala-D-Ala)-di-trans,octa-cis-undecaprenyl diphosphate + UMP. It participates in cell wall biogenesis; peptidoglycan biosynthesis. Its function is as follows. Catalyzes the initial step of the lipid cycle reactions in the biosynthesis of the cell wall peptidoglycan: transfers peptidoglycan precursor phospho-MurNAc-pentapeptide from UDP-MurNAc-pentapeptide onto the lipid carrier undecaprenyl phosphate, yielding undecaprenyl-pyrophosphoryl-MurNAc-pentapeptide, known as lipid I. The protein is Phospho-N-acetylmuramoyl-pentapeptide-transferase of Staphylococcus saprophyticus subsp. saprophyticus (strain ATCC 15305 / DSM 20229 / NCIMB 8711 / NCTC 7292 / S-41).